Consider the following 447-residue polypeptide: MTKKLYIETHGCQMNEYDSSRMVDLLGEHQALEVTEKPEEADVILLNTCSIREKAQDKVFSQLGRWRELKQANPDLVIGVGGCVASQEGAAIRDRAPYVDVVFGPQTLHRLPEMIDAARTTKTAQVDISFPEIEKFDRLPEPRVDGPSAFVSVMEGCSKYCTFCVVPYTRGEEVSRPLADVLLEITQLTDKGVKEVTLLGQNVNGYRGATPDGRIADFAELLHAVAALDGIERIRYTTSHPLEFSDAIIAAHAEIPQLVKYLHLPVQSGSDRILAAMKRNHTALEYKSRIRKLRAAVPDILISSDFIVGFPGETEKDFEQTMKLIEDVGFDFSFSFIYSSRPGTPAADLVDDTPDEVKKQRLAILQHRINQYGFENSRRMVGTVQRILVSDYSKKDPGMLQGRTEQNRIVNFRCDNPRLIGQFVDVHIDDALPHSLRGTLLDASTVN.

Residues 3–120 (KKLYIETHGC…LPEMIDAART (118 aa)) form the MTTase N-terminal domain. [4Fe-4S] cluster is bound by residues Cys12, Cys49, Cys83, Cys157, Cys161, and Cys164. One can recognise a Radical SAM core domain in the interval 143–375 (RVDGPSAFVS…QHRINQYGFE (233 aa)). The TRAM domain maps to 378 to 442 (RRMVGTVQRI…PHSLRGTLLD (65 aa)).

This sequence belongs to the methylthiotransferase family. MiaB subfamily. In terms of assembly, monomer. The cofactor is [4Fe-4S] cluster.

Its subcellular location is the cytoplasm. It catalyses the reaction N(6)-dimethylallyladenosine(37) in tRNA + (sulfur carrier)-SH + AH2 + 2 S-adenosyl-L-methionine = 2-methylsulfanyl-N(6)-dimethylallyladenosine(37) in tRNA + (sulfur carrier)-H + 5'-deoxyadenosine + L-methionine + A + S-adenosyl-L-homocysteine + 2 H(+). Its function is as follows. Catalyzes the methylthiolation of N6-(dimethylallyl)adenosine (i(6)A), leading to the formation of 2-methylthio-N6-(dimethylallyl)adenosine (ms(2)i(6)A) at position 37 in tRNAs that read codons beginning with uridine. The polypeptide is tRNA-2-methylthio-N(6)-dimethylallyladenosine synthase (Ectopseudomonas mendocina (strain ymp) (Pseudomonas mendocina)).